Here is a 414-residue protein sequence, read N- to C-terminus: Esterase FrsA (414 aa).

This sequence belongs to the FrsA family.

It carries out the reaction a carboxylic ester + H2O = an alcohol + a carboxylate + H(+). Functionally, catalyzes the hydrolysis of esters. The chain is Esterase FrsA from Escherichia coli O139:H28 (strain E24377A / ETEC).